A 310-amino-acid chain; its full sequence is NADH-cytochrome b5 reductase 1 (310 aa).

Residues 32-52 traverse the membrane as a helical segment; that stretch reads EWLPYAVALAAILSGGKVFSN. The FAD-binding FR-type domain maps to 61 to 166; it reads TEFQNFELKE…RGPKGAMVYT (106 aa). FAD is bound by residues 146–161 and 172–209; these read AGLR…GPKG and KIGM…QVDL.

The protein belongs to the flavoprotein pyridine nucleotide cytochrome reductase family. In terms of assembly, monomer. Component of the 2-(3-amino-3-carboxypropyl)histidine synthase complex composed of DPH1, DPH2, DPH3 and a NADH-dependent reductase, predominantly CBR1. It depends on FAD as a cofactor.

The protein localises to the mitochondrion outer membrane. The enzyme catalyses 2 Fe(III)-[cytochrome b5] + NADH = 2 Fe(II)-[cytochrome b5] + NAD(+) + H(+). It catalyses the reaction 2 Fe(3+)-[Dph3] + NADH = 2 Fe(2+)-[Dph3] + NAD(+) + H(+). It participates in protein modification; peptidyl-diphthamide biosynthesis. Functionally, NADH-dependent reductase for DPH3 and cytochrome b5. Required for the first step of diphthamide biosynthesis, a post-translational modification of histidine which occurs in elongation factor 2. DPH1 and DPH2 transfer a 3-amino-3-carboxypropyl (ACP) group from S-adenosyl-L-methionine (SAM) to a histidine residue, the reaction is assisted by a reduction system comprising DPH3 and a NADH-dependent reductase, predominantly CBR1. By reducing DPH3, also involved in the formation of the tRNA wobble base modification mcm5s 2U (5-methoxycarbonylmethyl-2-thiouridine), mediated by the elongator complex. The cytochrome b5/NADH cytochrome b5 reductase electron transfer system supports the catalytic activity of several sterol biosynthetic enzymes. The sequence is that of NADH-cytochrome b5 reductase 1 (CBR1) from Ajellomyces capsulatus (strain NAm1 / WU24) (Darling's disease fungus).